A 209-amino-acid polypeptide reads, in one-letter code: Pyroglutamyl-peptidase 1 (209 aa).

Catalysis depends on residues E85, C149, and H168.

It belongs to the peptidase C15 family. Monomer.

Its subcellular location is the cytoplasm. It carries out the reaction Release of an N-terminal pyroglutamyl group from a polypeptide, the second amino acid generally not being Pro.. Inhibited by transition metal ions including Ni(2+), Zn(2+), and Cu(2+) and by sulfhydryl-blocking agents. Removes 5-oxoproline from various penultimate amino acid residues except L-proline. This chain is Pyroglutamyl-peptidase 1 (PGPEP1), found in Homo sapiens (Human).